A 301-amino-acid polypeptide reads, in one-letter code: uncharacterized protein (301 aa).

A divalent metal cation is bound by residues Glu146, Glu148, and Asp177.

Belongs to the FAH family.

This is an uncharacterized protein from Staphylococcus haemolyticus (strain JCSC1435).